A 699-amino-acid polypeptide reads, in one-letter code: Polyribonucleotide nucleotidyltransferase (699 aa).

Mg(2+) is bound by residues Asp-485 and Asp-491. Positions 552–611 constitute a KH domain; it reads PRITTIKINPEKIRDVIGKGGAVIRALTEETGTTIELEDDGTVKIASSNGEATKEAIRRI. The S1 motif domain occupies 621–689; that stretch reads GRIYNGKVIR…RQGRVRLSIK (69 aa).

The protein belongs to the polyribonucleotide nucleotidyltransferase family. As to quaternary structure, component of the RNA degradosome, which is a multiprotein complex involved in RNA processing and mRNA degradation. It depends on Mg(2+) as a cofactor.

Its subcellular location is the cytoplasm. The catalysed reaction is RNA(n+1) + phosphate = RNA(n) + a ribonucleoside 5'-diphosphate. Functionally, involved in mRNA degradation. Catalyzes the phosphorolysis of single-stranded polyribonucleotides processively in the 3'- to 5'-direction. The chain is Polyribonucleotide nucleotidyltransferase from Shewanella sp. (strain MR-4).